A 690-amino-acid polypeptide reads, in one-letter code: Elongation factor G (690 aa).

A tr-type G domain is found at 8–283 (EDYRNFGIMA…AVVDYLPSPV (276 aa)). Residues 17–24 (AHIDAGKT), 81–85 (DTPGH), and 135–138 (NKMD) each bind GTP.

It belongs to the TRAFAC class translation factor GTPase superfamily. Classic translation factor GTPase family. EF-G/EF-2 subfamily.

It localises to the cytoplasm. Catalyzes the GTP-dependent ribosomal translocation step during translation elongation. During this step, the ribosome changes from the pre-translocational (PRE) to the post-translocational (POST) state as the newly formed A-site-bound peptidyl-tRNA and P-site-bound deacylated tRNA move to the P and E sites, respectively. Catalyzes the coordinated movement of the two tRNA molecules, the mRNA and conformational changes in the ribosome. This Rhodopseudomonas palustris (strain HaA2) protein is Elongation factor G.